The primary structure comprises 194 residues: Leucyl/phenylalanyl-tRNA--protein transferase (194 aa).

It belongs to the L/F-transferase family.

It is found in the cytoplasm. The enzyme catalyses N-terminal L-lysyl-[protein] + L-leucyl-tRNA(Leu) = N-terminal L-leucyl-L-lysyl-[protein] + tRNA(Leu) + H(+). The catalysed reaction is N-terminal L-arginyl-[protein] + L-leucyl-tRNA(Leu) = N-terminal L-leucyl-L-arginyl-[protein] + tRNA(Leu) + H(+). It catalyses the reaction L-phenylalanyl-tRNA(Phe) + an N-terminal L-alpha-aminoacyl-[protein] = an N-terminal L-phenylalanyl-L-alpha-aminoacyl-[protein] + tRNA(Phe). Functionally, functions in the N-end rule pathway of protein degradation where it conjugates Leu, Phe and, less efficiently, Met from aminoacyl-tRNAs to the N-termini of proteins containing an N-terminal arginine or lysine. This chain is Leucyl/phenylalanyl-tRNA--protein transferase, found in Chlorobium limicola (strain DSM 245 / NBRC 103803 / 6330).